We begin with the raw amino-acid sequence, 328 residues long: L-lactate dehydrogenase (328 aa).

Residues valine 18, glutamate 39, lysine 46, tyrosine 71, and glycine 85–alanine 86 contribute to the NAD(+) site. 2 residues coordinate substrate: glutamine 88 and arginine 94. NAD(+) is bound by residues serine 107, alanine 124–asparagine 126, and serine 149. Substrate is bound at residue asparagine 126–aspartate 129. Aspartate 154–arginine 157 lines the substrate pocket. The beta-D-fructose 1,6-bisphosphate site is built by arginine 159 and histidine 174. Catalysis depends on histidine 181, which acts as the Proton acceptor. Tyrosine 226 carries the phosphotyrosine modification. Threonine 235 provides a ligand contact to substrate.

Belongs to the LDH/MDH superfamily. LDH family. In terms of assembly, homotetramer.

It localises to the cytoplasm. The enzyme catalyses (S)-lactate + NAD(+) = pyruvate + NADH + H(+). The protein operates within fermentation; pyruvate fermentation to lactate; (S)-lactate from pyruvate: step 1/1. With respect to regulation, allosterically activated by fructose 1,6-bisphosphate (FBP). Its function is as follows. Catalyzes the conversion of lactate to pyruvate. The sequence is that of L-lactate dehydrogenase from Streptococcus gordonii (strain Challis / ATCC 35105 / BCRC 15272 / CH1 / DL1 / V288).